We begin with the raw amino-acid sequence, 312 residues long: Glycerol 2-dehydrogenase (NADP(+)) (312 aa).

The active-site Proton donor is the Tyr56. Residue His112 participates in substrate binding. 220–274 contacts NADP(+); it reads SPLGSTDAPLLKEPVILEIAKKNNVQPGHVVISWHVQRGYVVLPKSVNPDRIKTN. Ser306 bears the Phosphoserine mark.

This sequence belongs to the aldo/keto reductase family.

The protein resides in the cytoplasm. It carries out the reaction glycerol + NADP(+) = dihydroxyacetone + NADPH + H(+). In terms of biological role, glycerol dehydrogenase involved in glycerol catabolism under microaerobic conditions. Has mRNA binding activity. The sequence is that of Glycerol 2-dehydrogenase (NADP(+)) (GCY1) from Saccharomyces cerevisiae (strain ATCC 204508 / S288c) (Baker's yeast).